Reading from the N-terminus, the 197-residue chain is Protein RmlC homolog (197 aa).

H76 acts as the Proton acceptor in catalysis. The active-site Proton donor is Y140.

In terms of biological role, could catalyze a 3,5-epimerization. In Streptococcus pyogenes serotype M6 (strain ATCC BAA-946 / MGAS10394), this protein is Protein RmlC homolog (rfbC).